Reading from the N-terminus, the 1077-residue chain is Insulin receptor substrate 2-B (1077 aa).

The segment at 1–66 is disordered; sequence MAGVLCPTEE…APASTAEDDV (66 aa). 2 consecutive short sequence motifs (YXXM motif) follow at residues 33-36 and 147-150; these read YRRM and YFAM. In terms of domain architecture, PH spans 65-170; it reads DVRKRGYLRK…WYQALSELIN (106 aa). Residues 195 to 299 enclose the IRS-type PTB domain; it reads FKEVWQVNVK…DTMKALKAYS (105 aa). Disordered stretches follow at residues 342 to 373, 428 to 464, and 476 to 495; these read ETVV…RPFR, VCSS…SDEY, and VRSN…EENT. Composition is skewed to polar residues over residues 350–364 and 428–444; these read SAKN…SSEG and VCSS…LTRP. A compositionally biased stretch (low complexity) spans 445-457; it reads SSSSVCGSPSDGG. Residues 477–495 show a composition bias toward polar residues; the sequence is RSNTPDSLGNTPPIQEENT. Residues 499–502 carry the YXXM motif 3 motif; the sequence is YMSM. A compositionally biased stretch (polar residues) spans 530–544; the sequence is KPTNAASQQKSQTAV. Residues 530 to 571 form a disordered region; that stretch reads KPTNAASQQKSQTAVSLDEDSEETNKQFAYAESPKLKDSSHV. Short sequence motifs (YXXM motif) lie at residues 595–598, 608–611, 634–637, 666–669, 713–716, and 891–894; these read YMPM, YLPM, YMMM, YMDM, YVPM, and YTTM.

In terms of processing, phosphorylated by INSR.

Potentiates insulin signaling. This Xenopus laevis (African clawed frog) protein is Insulin receptor substrate 2-B (irs2-b).